Here is a 249-residue protein sequence, read N- to C-terminus: Uridylate kinase (249 aa).

15 to 18 contacts ATP; sequence KLSG. Residues 23 to 28 are involved in allosteric activation by GTP; that stretch reads GEEGFG. Residue glycine 57 participates in UMP binding. Positions 58 and 62 each coordinate ATP. UMP is bound by residues aspartate 77 and 138–145; that span reads TGNPFFTT. Residues threonine 165, phenylalanine 171, and aspartate 174 each coordinate ATP.

This sequence belongs to the UMP kinase family. As to quaternary structure, homohexamer.

The protein resides in the cytoplasm. The enzyme catalyses UMP + ATP = UDP + ADP. It functions in the pathway pyrimidine metabolism; CTP biosynthesis via de novo pathway; UDP from UMP (UMPK route): step 1/1. Allosterically activated by GTP. Inhibited by UTP. Its function is as follows. Catalyzes the reversible phosphorylation of UMP to UDP. This Psychromonas ingrahamii (strain DSM 17664 / CCUG 51855 / 37) protein is Uridylate kinase.